The following is a 1013-amino-acid chain: MASENTAGSGSRVAGMVYSLWLLVLGPSVLALEEVLLDTTGETSEIGWLTYPPGGWDEVSVLDDQRRLTRTFEACHVAGLPPGSGQDNWLQTHFVERRGAQRAHIRLHFSVRACSSLGVSGGTCRETFTLYYRQADEPDSPDSISAWHLKRWTKVDTIAADESFPASSSSSSWAVGPHRTDQRVGLQLNVKERSFGPLTQRGFYVAFQDTGACLALVAVKLFSYTCPSVLRAFASFPETQASGAGGASLVAAVGTCVAHAEPEEDGVGGQAGGSPPRLHCNGEGRWMVAVGGCRCQPGHQPARGDKLCQACPEGSYKALPGNVPCSPCPARSHSPDPAAPVCPCLQGFYRASSDPPEAPCTGPPSAPRELWFEVQGSALMLHWRLPQELGGRGDLLFNVVCKECGGHKEPSSGGMCRRCRDEVHFDPRQRGLTESRVLVGGLRAHVPYILEVQAVNGVSELSPDPPQAAAINVSTSHEVPSAVPVMHQVSRAANSITVSWPQPEQTNGNILDYQLRYYDQAEDESHSFTMTSETNTATVTRLSPGHIYGFQVRARTAAGHGPYGGKVYFQTLPQGELSSQLPEKLSLVIGSILGALAFLLLAAITVLAVIFQRKRRGTGYTEQLQQYSSPGLGVKYYIDPSTYDDPCQAIRELAREVDPTYIKIEEVIGAGSFGEVRRGRLQPRGRREQAVAIQALWAGGAESLKMTFLGRAALLGQFQHPNILRLEGVVTRSRPVMVLTELMELGPLDSFLRQREGQFSSLQLVAMQRGVAAAMQYLSSFAFVHRALSARSVLVNSHLVCKVARLGHSPQGSSSLLRWAAPEVITHGKYTTSSDVWSFGILMWEVMSYGERPYWDMSDQEVLNAIEQEFRLPPPPGCPTGLHLLMLDTWQKDRARRPHFDQLVAAFDKMIRKPDTLQAEGSSGDRPSQALLNPVALDFPCLDSPQAWLSAIGLECYQDNFSKFGLSTFSDVAQLSLEDLPGLGITLAGHQKKLLHNIQLLQQHLRQPGSVEV.

The N-terminal stretch at 1–31 (MASENTAGSGSRVAGMVYSLWLLVLGPSVLA) is a signal peptide. Over 32–590 (LEEVLLDTTG…LPEKLSLVIG (559 aa)) the chain is Extracellular. An Eph LBD domain is found at 33–231 (EEVLLDTTGE…FSYTCPSVLR (199 aa)). 2 Fibronectin type-III domains span residues 363–478 (PPSA…TSHE) and 479–574 (VPSA…TLPQ). A glycan (N-linked (GlcNAc...) asparagine) is linked at Asn-472. Residues 591–611 (SILGALAFLLLAAITVLAVIF) traverse the membrane as a helical segment. Topologically, residues 612 to 1013 (QRKRRGTGYT…HLRQPGSVEV (402 aa)) are cytoplasmic. Residues 662 to 911 (IKIEEVIGAG…QLVAAFDKMI (250 aa)) form the Protein kinase domain. 668–676 (IGAGSFGEV) contributes to the ATP binding site. In terms of domain architecture, SAM spans 940–1004 (PCLDSPQAWL…LHNIQLLQQH (65 aa)). Positions 1011–1013 (VEV) match the PDZ-binding motif.

Belongs to the protein kinase superfamily. Tyr protein kinase family. Ephrin receptor subfamily. Interacts with CBL and EPHB1. Interacts with FYN; this interaction takes place in a ligand-independent manner. In terms of processing, ligand-binding increases phosphorylation on tyrosine residues. Phosphorylation on tyrosine residues is mediated by transphosphorylation by the catalytically active EPHB1 in a ligand-independent manner. Tyrosine phosphorylation of the receptor may act as a switch on the functional transition from cell adhesion/attraction to de-adhesion/repulsion.

It localises to the membrane. Its function is as follows. Kinase-defective receptor for members of the ephrin-B family. Binds to ephrin-B1 and ephrin-B2. Modulates cell adhesion and migration by exerting both positive and negative effects upon stimulation with ephrin-B2. Inhibits JNK activation, T-cell receptor-induced IL-2 secretion and CD25 expression upon stimulation with ephrin-B2. This chain is Ephrin type-B receptor 6 (Ephb6), found in Rattus norvegicus (Rat).